A 368-amino-acid polypeptide reads, in one-letter code: Histidinol-phosphate aminotransferase (368 aa).

Position 229 is an N6-(pyridoxal phosphate)lysine (K229).

Belongs to the class-II pyridoxal-phosphate-dependent aminotransferase family. Histidinol-phosphate aminotransferase subfamily. In terms of assembly, homodimer. The cofactor is pyridoxal 5'-phosphate.

The enzyme catalyses L-histidinol phosphate + 2-oxoglutarate = 3-(imidazol-4-yl)-2-oxopropyl phosphate + L-glutamate. Its pathway is amino-acid biosynthesis; L-histidine biosynthesis; L-histidine from 5-phospho-alpha-D-ribose 1-diphosphate: step 7/9. The sequence is that of Histidinol-phosphate aminotransferase from Acidovorax sp. (strain JS42).